The following is a 346-amino-acid chain: Enoyl-[acyl-carrier-protein] reductase, mitochondrial (346 aa).

The transit peptide at 1-22 (MQKTIRSQALIYRKFGDPLKVL) directs the protein to the mitochondrion. The Proton donor role is filled by Tyr59. NADP(+) is bound by residues Asn131, 157 to 160 (NSGV), 180 to 182 (RNR), 249 to 252 (YGGM), 274 to 276 (VAV), and Lys332.

Belongs to the zinc-containing alcohol dehydrogenase family. Quinone oxidoreductase subfamily. In terms of assembly, homodimer.

It localises to the mitochondrion. It catalyses the reaction a 2,3-saturated acyl-[ACP] + NADP(+) = a (2E)-enoyl-[ACP] + NADPH + H(+). Its function is as follows. Catalyzes the NADPH-dependent reduction of trans-2-enoyl thioesters in mitochondrial fatty acid synthesis (fatty acid synthesis type II). Fatty acid chain elongation in mitochondria uses acyl carrier protein (ACP) as an acyl group carrier, but the enzyme accepts both ACP and CoA thioesters as substrates in vitro. May provide the octanoyl chain used for lipoic acid biosynthesis, regulating protein lipoylation and mitochondrial respiratory activity. Involved in iron homeostasis; affecting Fe-S cluster assembly and ceramide metabolism. Required for proper morphology and bioenergetic functions of mitochondria. Required for maintenance of neurons. In Caenorhabditis elegans, this protein is Enoyl-[acyl-carrier-protein] reductase, mitochondrial.